The sequence spans 530 residues: Bifunctional purine biosynthesis protein PurH (530 aa).

Positions 1 to 148 (MNNARPIHRA…KNHKDVAIVV (148 aa)) constitute an MGS-like domain.

This sequence belongs to the PurH family.

The catalysed reaction is (6R)-10-formyltetrahydrofolate + 5-amino-1-(5-phospho-beta-D-ribosyl)imidazole-4-carboxamide = 5-formamido-1-(5-phospho-D-ribosyl)imidazole-4-carboxamide + (6S)-5,6,7,8-tetrahydrofolate. The enzyme catalyses IMP + H2O = 5-formamido-1-(5-phospho-D-ribosyl)imidazole-4-carboxamide. It functions in the pathway purine metabolism; IMP biosynthesis via de novo pathway; 5-formamido-1-(5-phospho-D-ribosyl)imidazole-4-carboxamide from 5-amino-1-(5-phospho-D-ribosyl)imidazole-4-carboxamide (10-formyl THF route): step 1/1. It participates in purine metabolism; IMP biosynthesis via de novo pathway; IMP from 5-formamido-1-(5-phospho-D-ribosyl)imidazole-4-carboxamide: step 1/1. The sequence is that of Bifunctional purine biosynthesis protein PurH from Vibrio cholerae serotype O1 (strain ATCC 39541 / Classical Ogawa 395 / O395).